The chain runs to 270 residues: MENPVLIQKAPRRYKSAIPLFLFHDGGGTVLPYYFLESLNRNVWGVSYPHLNDGGTFEHGIKGMGELYAGYIRGKVSRGKVLLGGWSAGGSIAIQVAKCLENIPELCVAGIILLDTPFPDFPDWRPKNSPPVQFHIPVVPDQTAKSRLAQQQAVNDIIHALSVWELPTWENGRRPPPAVFIRALKVVPTEKVVEVDWFREEYALGWQKYPYNFIVEELRVDGDHFSIFTPSYLPELSTKLREALDLLDSKPETGILLDSKLNSSIVISAL.

This sequence belongs to the AMT4 thioesterase family.

It functions in the pathway polyketide biosynthesis. Its function is as follows. Probable thioesterase; part of the gene cluster B that mediates the biosynthesis of botcinic acid and its botcinin derivatives, acetate-derived polyketides that contribute to virulence when combined with the sesquiterpene botrydial. Botcinic acid and its derivatives have been shown to induce chlorosis and necrosis during host plant infection, but also have antifungal activities. Two polyketide synthases, BOA6 and BOA9, are involved in the biosynthesis of botcinins. BOA6 mediates the formation of the per-methylated tetraketide core by condensation of four units of malonyl-CoA with one unit of acetyl-CoA, which would be methylated in activated methylene groups to yield a bicyclic acid intermediate that could then either be converted to botrylactone derivatives or lose the starter acetate unit through a retro-Claisen type C-C bond cleavage to yield botcinin derivatives. The second polyketide synthase, BOA9, is probably required for the biosynthesis of the tetraketide side chain of botcinins. The methyltransferase (MT) domain within BOA6 is probably responsible for the incorporation of four methyl groups. The trans-enoyl reductase BOA5 might take over the enoyl reductase function of BOA6 that misses an ER domain. The monooxygenases BOA2, BOA3 and BOA4 might be involved in further hydroxylations at C4, C5 and C8, whereas BOA7, close to BOA9, could potentially be involved in the hydroxylation at C4 in the side chain of botcinins. The chain is Probable thioesterase BOA10 from Botryotinia fuckeliana (strain B05.10) (Noble rot fungus).